The chain runs to 467 residues: Cruzipain (467 aa).

Positions 1–18 are cleaved as a signal peptide; sequence MSGWARALLLAAVLVVMA. Residues 19 to 122 constitute a propeptide, activation peptide; it reads CLVPAATASL…RVPVKVEVVG (104 aa). 3 cysteine pairs are disulfide-bonded: Cys144/Cys185, Cys178/Cys223, and Cys277/Cys325. The active site involves Cys147. Residue Asn169 is glycosylated (N-linked (GlcNAc...) asparagine). The active site involves His284. Residue Asn292 is glycosylated (N-linked (GlcNAc...) asparagine). The active site involves Asn304. Positions 333–355 are disordered; sequence SAVVGGPGPTPEPTTTTTTSAPG. Low complexity predominate over residues 345 to 354; sequence PTTTTTTSAP. Asn377 is a glycosylation site (N-linked (GlcNAc...) asparagine).

This sequence belongs to the peptidase C1 family.

It catalyses the reaction Broad endopeptidase specificity similar to that of cathepsin L.. Strongly inhibited by E-64 (L-trans-epoxysuccinylleucylamido(4-guanidino)butane), Leupeptin, and N-alpha-p-tosyl-L-lysine chloromethyl ketone. In terms of biological role, hydrolyzes chromogenic peptides at the carboxyl Arg or Lys; requires at least one more amino acid, preferably Arg, Phe, Val or Leu, between the terminal Arg or Lys and the amino-blocking group. Its function is as follows. The cysteine protease may play an important role in the development and differentiation of the parasites at several stages of their life cycle. This Trypanosoma cruzi protein is Cruzipain.